The chain runs to 206 residues: Large ribosomal subunit protein uL3 (206 aa).

It belongs to the universal ribosomal protein uL3 family. Part of the 50S ribosomal subunit. Forms a cluster with proteins L14 and L19.

Its function is as follows. One of the primary rRNA binding proteins, it binds directly near the 3'-end of the 23S rRNA, where it nucleates assembly of the 50S subunit. This Thermus thermophilus (strain ATCC BAA-163 / DSM 7039 / HB27) protein is Large ribosomal subunit protein uL3.